The primary structure comprises 187 residues: Tumor necrosis factor ligand superfamily member 4 (187 aa).

Over 1 to 23 (MEGVRPLEENVGNAPRPRFERNK) the chain is Cytoplasmic. Residues 24–44 (LLLVASVVQALGLLLCLTYVC) form a helical; Signal-anchor for type II membrane protein membrane-spanning segment. The Extracellular segment spans residues 45 to 187 (QHSHAPEVSL…LQNPGGYCAP (143 aa)). The 120-residue stretch at 58-177 (PIENIMTQLQ…SVNAGELIVI (120 aa)) folds into the THD domain. 2 disulfide bridges follow: C74-C164 and C101-C185. 2 N-linked (GlcNAc...) asparagine glycosylation sites follow: N94 and N156.

This sequence belongs to the tumor necrosis factor family. In terms of assembly, homotrimer.

The protein resides in the membrane. Functionally, cytokine that binds to TNFRSF4. Co-stimulates T-cell proliferation and cytokine production. This chain is Tumor necrosis factor ligand superfamily member 4 (TNFSF4), found in Oryctolagus cuniculus (Rabbit).